Here is a 455-residue protein sequence, read N- to C-terminus: Protein FAM124B (455 aa).

Position 49 is a phosphoserine (Ser49). Positions 270–322 are disordered; that stretch reads TSVSAKRTSEPRSQRNQGKRSQGHSLELPEPSGSPTSDRCAGTSWKSPGRSFQ. A compositionally biased stretch (polar residues) spans 313–322; sequence SWKSPGRSFQ.

The protein belongs to the FAM124 family. Interacts with CHD7 and CHD8.

The protein resides in the nucleus. The polypeptide is Protein FAM124B (FAM124B) (Homo sapiens (Human)).